The following is a 273-amino-acid chain: Dermonecrotic toxin LsaSicTox-alphaIB1aiii (273 aa).

Histidine 5 is a catalytic residue. The Mg(2+) site is built by glutamate 25 and aspartate 27. Histidine 41 serves as the catalytic Nucleophile. 2 disulfides stabilise this stretch: cysteine 45-cysteine 51 and cysteine 47-cysteine 190. Aspartate 85 provides a ligand contact to Mg(2+).

This sequence belongs to the arthropod phospholipase D family. Class II subfamily. The cofactor is Mg(2+). In terms of tissue distribution, expressed by the venom gland.

The protein resides in the secreted. The enzyme catalyses an N-(acyl)-sphingosylphosphocholine = an N-(acyl)-sphingosyl-1,3-cyclic phosphate + choline. It catalyses the reaction an N-(acyl)-sphingosylphosphoethanolamine = an N-(acyl)-sphingosyl-1,3-cyclic phosphate + ethanolamine. The catalysed reaction is a 1-acyl-sn-glycero-3-phosphocholine = a 1-acyl-sn-glycero-2,3-cyclic phosphate + choline. It carries out the reaction a 1-acyl-sn-glycero-3-phosphoethanolamine = a 1-acyl-sn-glycero-2,3-cyclic phosphate + ethanolamine. Functionally, dermonecrotic toxins cleave the phosphodiester linkage between the phosphate and headgroup of certain phospholipids (sphingolipid and lysolipid substrates), forming an alcohol (often choline) and a cyclic phosphate. This toxin acts on sphingomyelin (SM). It may also act on ceramide phosphoethanolamine (CPE), lysophosphatidylcholine (LPC) and lysophosphatidylethanolamine (LPE), but not on lysophosphatidylserine (LPS), and lysophosphatidylglycerol (LPG). It acts by transphosphatidylation, releasing exclusively cyclic phosphate products as second products. Induces dermonecrosis, hemolysis, increased vascular permeability, edema, inflammatory response, and platelet aggregation. This is Dermonecrotic toxin LsaSicTox-alphaIB1aiii from Loxosceles sabina (Tucson recluse spider).